A 135-amino-acid polypeptide reads, in one-letter code: Large ribosomal subunit protein uL16c (135 aa).

This sequence belongs to the universal ribosomal protein uL16 family. Part of the 50S ribosomal subunit.

The protein localises to the plastid. It localises to the chloroplast. The sequence is that of Large ribosomal subunit protein uL16c from Eucalyptus globulus subsp. globulus (Tasmanian blue gum).